The primary structure comprises 186 residues: Tumor necrosis factor alpha-induced protein 8-like protein 2 (186 aa).

The protein belongs to the TNFAIP8 family. TNFAIP8L2 subfamily.

Acts as a negative regulator of innate and adaptive immunity by maintaining immune homeostasis. Negative regulator of Toll-like receptor and T-cell receptor function. Prevents hyperresponsiveness of the immune system and maintains immune homeostasis. Inhibits jun/ap1 and NF-kappa-B activation. Promotes Fas-induced apoptosis. This Xenopus laevis (African clawed frog) protein is Tumor necrosis factor alpha-induced protein 8-like protein 2 (tnfaip8l2).